A 128-amino-acid polypeptide reads, in one-letter code: Large ribosomal subunit protein bL17 (128 aa).

Belongs to the bacterial ribosomal protein bL17 family. Part of the 50S ribosomal subunit. Contacts protein L32.

The sequence is that of Large ribosomal subunit protein bL17 from Baumannia cicadellinicola subsp. Homalodisca coagulata.